Here is a 594-residue protein sequence, read N- to C-terminus: (-)-endo-fenchol synthase, chloroplastic (594 aa).

A chloroplast-targeting transit peptide spans 1-50 (MSSLVMHVGIVNKPAITYLPTLSRSASNLHNVSSTRLQTSCSLQLDYKPV). Mg(2+)-binding residues include D348, D352, D492, and E500. The DDXXD motif motif lies at 348–352 (DDIYD).

Belongs to the terpene synthase family. Tpsa subfamily. Requires Mg(2+) as cofactor. Mn(2+) serves as cofactor. Expressed at high levels in leaves.

It is found in the plastid. The protein resides in the chloroplast. The catalysed reaction is (2E)-geranyl diphosphate = alpha-pinene + diphosphate. It catalyses the reaction (2E)-geranyl diphosphate + H2O = (1S,2S,4R)-endo-fenchol + diphosphate. The enzyme catalyses (2E)-geranyl diphosphate = limonene + diphosphate. It functions in the pathway secondary metabolite biosynthesis; terpenoid biosynthesis. In terms of biological role, monoterpene synthase involved in the biosynthesis of volatile compounds widely used in aromatherapy and folk medicine, and present in culinary herbs. Mediates the conversion of (2E)-geranyl diphosphate (GPP) into alpha fenchol, limonene and alpha-pinene and, as minor compounds, into beta-myrcene, alpha-terpinolene and alpha-phellandrene. The sequence is that of (-)-endo-fenchol synthase, chloroplastic from Lavandula pedunculata subsp. lusitanica (French lavender).